Reading from the N-terminus, the 286-residue chain is Bifunctional protein FolD (286 aa).

NADP(+)-binding positions include 166–168 and isoleucine 232; that span reads GAS.

Belongs to the tetrahydrofolate dehydrogenase/cyclohydrolase family. Homodimer.

The catalysed reaction is (6R)-5,10-methylene-5,6,7,8-tetrahydrofolate + NADP(+) = (6R)-5,10-methenyltetrahydrofolate + NADPH. It carries out the reaction (6R)-5,10-methenyltetrahydrofolate + H2O = (6R)-10-formyltetrahydrofolate + H(+). Its pathway is one-carbon metabolism; tetrahydrofolate interconversion. Functionally, catalyzes the oxidation of 5,10-methylenetetrahydrofolate to 5,10-methenyltetrahydrofolate and then the hydrolysis of 5,10-methenyltetrahydrofolate to 10-formyltetrahydrofolate. The polypeptide is Bifunctional protein FolD (Shewanella woodyi (strain ATCC 51908 / MS32)).